Consider the following 96-residue polypeptide: Dynein light chain roadblock-type 1 (96 aa).

N-acetylalanine is present on Ala-2.

Belongs to the GAMAD family. As to quaternary structure, homodimer. The cytoplasmic dynein 1 complex consists of two catalytic heavy chains (HCs) and a number of non-catalytic subunits presented by intermediate chains (ICs), light intermediate chains (LICs) and light chains (LCs); the composition seems to vary in respect to the IC, LIC and LC composition. The heavy chain homodimer serves as a scaffold for the probable homodimeric assembly of the respective non-catalytic subunits. The ICs and LICs bind directly to the HC dimer and the LCs assemble on the IC dimer. Interacts with DYNLRB2. Interacts with DYNC1I1 and DYNC1I2. Interacts with RAB6A isoform 1 (GTP-bound); the interaction is direct. Interacts with RAB6A isoform 2 (GDP-bound); the interaction is direct. Interacts with RAB6B (GDP-bound).

The protein resides in the cytoplasm. Its subcellular location is the cytoskeleton. Acts as one of several non-catalytic accessory components of the cytoplasmic dynein 1 complex that are thought to be involved in linking dynein to cargos and to adapter proteins that regulate dynein function. Cytoplasmic dynein 1 acts as a motor for the intracellular retrograde motility of vesicles and organelles along microtubules. This is Dynein light chain roadblock-type 1 (Dynlrb1) from Mus musculus (Mouse).